A 223-amino-acid polypeptide reads, in one-letter code: 7-carboxy-7-deazaguanine synthase (223 aa).

Substrate contacts are provided by residues 12-14 (LQG) and R27. Residues 18–223 (FTGVPAIFIR…MQTHKYLNIA (206 aa)) enclose the Radical SAM core domain. Positions 31, 35, and 38 each coordinate [4Fe-4S] cluster. T40 provides a ligand contact to Mg(2+). T92 lines the substrate pocket. Residues G94 and 136-138 (SPK) contribute to the S-adenosyl-L-methionine site.

This sequence belongs to the radical SAM superfamily. 7-carboxy-7-deazaguanine synthase family. As to quaternary structure, homodimer. It depends on [4Fe-4S] cluster as a cofactor. Requires S-adenosyl-L-methionine as cofactor. Mg(2+) is required as a cofactor.

The catalysed reaction is 6-carboxy-5,6,7,8-tetrahydropterin + H(+) = 7-carboxy-7-deazaguanine + NH4(+). The protein operates within purine metabolism; 7-cyano-7-deazaguanine biosynthesis. In terms of biological role, catalyzes the complex heterocyclic radical-mediated conversion of 6-carboxy-5,6,7,8-tetrahydropterin (CPH4) to 7-carboxy-7-deazaguanine (CDG), a step common to the biosynthetic pathways of all 7-deazapurine-containing compounds. This is 7-carboxy-7-deazaguanine synthase from Escherichia coli (strain K12).